Reading from the N-terminus, the 361-residue chain is Phosphoserine aminotransferase (361 aa).

Residues serine 9 and arginine 42 each coordinate L-glutamate. Pyridoxal 5'-phosphate contacts are provided by residues 76 to 77, tryptophan 102, threonine 153, aspartate 173, and glutamine 196; that span reads AR. Residue lysine 197 is modified to N6-(pyridoxal phosphate)lysine. 238-239 is a binding site for pyridoxal 5'-phosphate; it reads NT.

It belongs to the class-V pyridoxal-phosphate-dependent aminotransferase family. SerC subfamily. Homodimer. The cofactor is pyridoxal 5'-phosphate.

The protein resides in the cytoplasm. The catalysed reaction is O-phospho-L-serine + 2-oxoglutarate = 3-phosphooxypyruvate + L-glutamate. It catalyses the reaction 4-(phosphooxy)-L-threonine + 2-oxoglutarate = (R)-3-hydroxy-2-oxo-4-phosphooxybutanoate + L-glutamate. The protein operates within amino-acid biosynthesis; L-serine biosynthesis; L-serine from 3-phospho-D-glycerate: step 2/3. Its pathway is cofactor biosynthesis; pyridoxine 5'-phosphate biosynthesis; pyridoxine 5'-phosphate from D-erythrose 4-phosphate: step 3/5. Functionally, catalyzes the reversible conversion of 3-phosphohydroxypyruvate to phosphoserine and of 3-hydroxy-2-oxo-4-phosphonooxybutanoate to phosphohydroxythreonine. The chain is Phosphoserine aminotransferase from Sodalis glossinidius (strain morsitans).